We begin with the raw amino-acid sequence, 71 residues long: uncharacterized protein (71 aa).

A helical transmembrane segment spans residues 12–34 (YLYNYFSSTTSWLVFIILSLDTI).

Its subcellular location is the membrane. This is an uncharacterized protein from Schizosaccharomyces pombe (strain 972 / ATCC 24843) (Fission yeast).